The chain runs to 307 residues: Ribonuclease Z (307 aa).

Zn(2+) is bound by residues His-64, His-66, Asp-68, His-69, His-141, Asp-209, and His-267. Asp-68 serves as the catalytic Proton acceptor.

This sequence belongs to the RNase Z family. In terms of assembly, homodimer. It depends on Zn(2+) as a cofactor.

The enzyme catalyses Endonucleolytic cleavage of RNA, removing extra 3' nucleotides from tRNA precursor, generating 3' termini of tRNAs. A 3'-hydroxy group is left at the tRNA terminus and a 5'-phosphoryl group is left at the trailer molecule.. Its function is as follows. Zinc phosphodiesterase, which displays some tRNA 3'-processing endonuclease activity. Probably involved in tRNA maturation, by removing a 3'-trailer from precursor tRNA. This chain is Ribonuclease Z, found in Thermoplasma acidophilum (strain ATCC 25905 / DSM 1728 / JCM 9062 / NBRC 15155 / AMRC-C165).